Reading from the N-terminus, the 132-residue chain is Aspartate 1-decarboxylase (132 aa).

Serine 25 serves as the catalytic Schiff-base intermediate with substrate; via pyruvic acid. Position 25 is a pyruvic acid (Ser) (serine 25). Substrate is bound at residue threonine 57. The Proton donor role is filled by tyrosine 58. 73-75 contributes to the substrate binding site; it reads GAA.

Belongs to the PanD family. As to quaternary structure, heterooctamer of four alpha and four beta subunits. Pyruvate is required as a cofactor. In terms of processing, is synthesized initially as an inactive proenzyme, which is activated by self-cleavage at a specific serine bond to produce a beta-subunit with a hydroxyl group at its C-terminus and an alpha-subunit with a pyruvoyl group at its N-terminus.

The protein localises to the cytoplasm. The catalysed reaction is L-aspartate + H(+) = beta-alanine + CO2. The protein operates within cofactor biosynthesis; (R)-pantothenate biosynthesis; beta-alanine from L-aspartate: step 1/1. In terms of biological role, catalyzes the pyruvoyl-dependent decarboxylation of aspartate to produce beta-alanine. In Geotalea uraniireducens (strain Rf4) (Geobacter uraniireducens), this protein is Aspartate 1-decarboxylase.